The primary structure comprises 246 residues: MAESGAGYRVELAKTGRAECKGTVCGRSKIGKGDLRFGTFVDVGKFQSWKWRHWGCVTERVLRNVNKKFEGDIKNCLDGFNELNDPIVQEKILRAFEQGHVDEEDEERCRKMASDASEEKDRKIEEGELTSEEEKEPIQDLRKSHKRKSVEKSSVPNKKHKAERKRSPSPKIEILEDDEEIEDVASDKDEEEKPWSGDEEDDDELVVKDSEDETEGVSTIASQRPRRSARRKVDYAESGNEYSDSD.

The segment at 8–99 (YRVELAKTGR…EKILRAFEQG (92 aa)) adopts a PARP-type; degenerate zinc-finger fold. Positions 103-126 (EEDEERCRKMASDASEEKDRKIEE) are enriched in basic and acidic residues. The interval 103–246 (EEDEERCRKM…ESGNEYSDSD (144 aa)) is disordered. Residue T130 is modified to Phosphothreonine. S131 carries the phosphoserine modification. The span at 157–168 (NKKHKAERKRSP) shows a compositional bias: basic residues. Positions 175–184 (LEDDEEIEDV) are enriched in acidic residues. Over residues 185-196 (ASDKDEEEKPWS) the composition is skewed to basic and acidic residues. Residues 197–215 (GDEEDDDELVVKDSEDETE) are compositionally biased toward acidic residues. Phosphoserine occurs at positions 243 and 245.

It is found in the nucleus. The protein localises to the mitochondrion. The sequence is that of PARP-type zinc finger-containing protein C2A9.07c from Schizosaccharomyces pombe (strain 972 / ATCC 24843) (Fission yeast).